The chain runs to 76 residues: Kappa-actitoxin-Avd4m (76 aa).

The first 19 residues, 1–19 (MNKALFLCLVVLCAAVVFA), serve as a signal peptide directing secretion. A propeptide spanning residues 20 to 31 (AEDLQKAKHAPF) is cleaved from the precursor. Intrachain disulfides connect C37–C72, C39–C65, and C55–C73.

This sequence belongs to the sea anemone type 3 (BDS) potassium channel toxin family. As to expression, weakly expressed in the ectodermal tissue from the distal and proximal tentacles, body wall, and oral disk.

It is found in the secreted. The protein resides in the nematocyst. In terms of biological role, blocks Kv3 voltage-gated potassium channels. Reduces blood pressure. The sequence is that of Kappa-actitoxin-Avd4m from Anemonia viridis (Snakelocks anemone).